The chain runs to 856 residues: MEYLEDNKTETFEEEDKEREEDQVLDSDEVLDSNELNDMQECLSQTDLSNIDNNRAIQQLSLGSMEFPSYTTNSEKEEMLLGLADNFWHQYTHLYPDRKPLFMCPRNECGVEKFVCTTLHPTLLPYSDLYDWDQSAKFVSEYLTMEPLNPPLELPRSLFSSTSVLQKQSGNCFDFSVLLCSLLLGAGYDAYCVSGYATREMCLMDEKRNICPLLNKVEESSWEIPQKPLKKYTVKPPRQLISKFAVQQEAKKQAKMEEALRNEQEEETRLKEDAEKPGPDNLHGLRVHCWVLVLSGKREVPENFFIDALTGKSYATISEPFLGVESVWNHEDYWVNMQDCRNGCKDMKFDLGDPVCWEYLLQGGSKPLLLIPDEEDEEELNGETIQENKTIFQMPPSWVLPIVIRPKEFETRCPQGRKILQYKKAKHEKWAPYLKRDGHVSRLTGYLDTECTQEVKIQDCFQNRKDKLDLREQNKIEQVTTEYFIPGRADSLKVHEYRSLAPETERSMMFYSEARLDGLQRRDEKPVEMTEIYQGRADFLYYRHIVFGKRPKKVAIAGGPTEANPRPILKITERFNRNKEKPANEDVAERTFLLTEDRIQLRCHRKDDHITTSYWEFLKPANLGEKDTPIVLTPETCISYQVEPSEKFSKQLYVYETLVTLQQAEQNSKDNVRKSETEVREILATRAQEEADPQLTISIYDTERNEKSKEKREAMERAIQEERQRRAVQELDYLAPFLAQLGDPEKLTLWQAQKVKEDCLSDMKQRLIEKANLIQARFEKETQELQKKQQWYHQNQMSMSKEDEEAYLDYCSEAMFRIHILETRLNRHKDLAPQKYLALEDRLNKDPRLREPFLTS.

Positions methionine 1–threonine 11 are enriched in basic and acidic residues. Disordered regions lie at residues methionine 1–valine 30 and lysine 255–proline 277. Acidic residues predominate over residues phenylalanine 12–valine 30. Coiled coils occupy residues alanine 245–lysine 276, leucine 661–tyrosine 733, and lysine 764–glutamine 790.

The protein belongs to the DRC7 family. In terms of assembly, component of the nexin-dynein regulatory complex (N-DRC).

Its subcellular location is the cell projection. The protein localises to the cilium. It localises to the flagellum. The protein resides in the cytoplasm. It is found in the cytoskeleton. Its subcellular location is the cilium axoneme. The protein localises to the flagellum axoneme. In terms of biological role, component of the nexin-dynein regulatory complex (N-DRC) a key regulator of ciliary/flagellar motility which maintains the alignment and integrity of the distal axoneme and regulates microtubule sliding in motile axonemes. Involved in the regulation of flagellar motility. Essential for male fertility, sperm head morphogenesis and sperm flagellum formation. The sequence is that of Dynein regulatory complex subunit 7 (drc7) from Xenopus tropicalis (Western clawed frog).